The sequence spans 838 residues: Protein translocase subunit SecA (838 aa).

Residues Q85, 103–107, and D493 contribute to the ATP site; that span reads GEGKT. Residues C823, C825, C834, and H835 each contribute to the Zn(2+) site.

The protein belongs to the SecA family. In terms of assembly, monomer and homodimer. Part of the essential Sec protein translocation apparatus which comprises SecA, SecYEG and auxiliary proteins SecDF. Other proteins may also be involved. Requires Zn(2+) as cofactor.

The protein localises to the cell membrane. It is found in the cytoplasm. The catalysed reaction is ATP + H2O + cellular proteinSide 1 = ADP + phosphate + cellular proteinSide 2.. In terms of biological role, part of the Sec protein translocase complex. Interacts with the SecYEG preprotein conducting channel. Has a central role in coupling the hydrolysis of ATP to the transfer of proteins into and across the cell membrane, serving as an ATP-driven molecular motor driving the stepwise translocation of polypeptide chains across the membrane. The sequence is that of Protein translocase subunit SecA from Streptococcus gordonii (strain Challis / ATCC 35105 / BCRC 15272 / CH1 / DL1 / V288).